We begin with the raw amino-acid sequence, 408 residues long: Eukaryotic initiation factor 4A-II (408 aa).

The interval 1 to 22 (MSGGSADYNSREHGGPEGMDPD) is disordered. The Q motif signature appears at 34–62 (DNFDDMNLKESLLRGIYAYGFEKPSAIQQ). The Helicase ATP-binding domain occupies 65–236 (IIPCIKGYDV…KKFMRDPIRI (172 aa)). 77–84 (QAQSGTGK) is a binding site for ATP. Thr-160 carries the post-translational modification Phosphothreonine. Positions 183–186 (LDEA) match the DEAD box motif. The Helicase C-terminal domain maps to 247–408 (GIKQFYINVE…EMPMNVADLI (162 aa)).

This sequence belongs to the DEAD box helicase family. eIF4A subfamily. As to quaternary structure, eIF4F is a multi-subunit complex, the composition of which varies with external and internal environmental conditions. It is composed of at least EIF4A, EIF4E and EIF4G1/EIFFG3. Interacts with EIF4E. May interact with NOM1.

It carries out the reaction ATP + H2O = ADP + phosphate + H(+). Functionally, ATP-dependent RNA helicase which is a subunit of the eIF4F complex involved in cap recognition and is required for mRNA binding to ribosome. In the current model of translation initiation, eIF4A unwinds RNA secondary structures in the 5'-UTR of mRNAs which is necessary to allow efficient binding of the small ribosomal subunit, and subsequent scanning for the initiator codon. This Macaca fascicularis (Crab-eating macaque) protein is Eukaryotic initiation factor 4A-II (EIF4A2).